We begin with the raw amino-acid sequence, 1098 residues long: Sister-chromatid cohesion protein 3 (1098 aa).

Residues Met1–Asn68 form a disordered region. A coiled-coil region spans residues Arg245–Asp265. In terms of domain architecture, SCD spans Phe275–Met360. Coiled-coil stretches lie at residues Lys632–Asp653, Leu888–Glu908, and Leu1009–Arg1032. The disordered stretch occupies residues Glu1027 to Leu1077. Residues Arg1040–Asp1050 show a composition bias toward basic and acidic residues.

This sequence belongs to the SCC3 family. In terms of assembly, part of the cohesin complex. Interacts with DEK3. In terms of tissue distribution, expressed in roots, mature leaves, buds and seedlings.

It localises to the nucleus. Its subcellular location is the chromosome. Essential component of cohesin complex, a complex required for the cohesion of sister chromatids after DNA replication. The cohesin complex apparently forms a large proteinaceous ring within which sister chromatids can be trapped. At anaphase, the complex is cleaved and dissociates from chromatin, allowing sister chromatids to segregate. The cohesin complex may also play a role in spindle pole assembly during mitosis. Required for centromere cohesion maintenance at anaphase I and for the monopolar orientation of the kinetochores during both male and female meiosis. Also involved in mitosis. This is Sister-chromatid cohesion protein 3 from Arabidopsis thaliana (Mouse-ear cress).